Here is a 497-residue protein sequence, read N- to C-terminus: Protein nucleotidyltransferase YdiU (497 aa).

ATP contacts are provided by Gly88, Gly90, Arg91, Lys110, Asp122, Gly123, Arg173, and Arg180. Asp249 acts as the Proton acceptor in catalysis. Mg(2+)-binding residues include Asn250 and Asp259. Asp259 provides a ligand contact to ATP.

It belongs to the SELO family. It depends on Mg(2+) as a cofactor. Mn(2+) serves as cofactor.

The catalysed reaction is L-seryl-[protein] + ATP = 3-O-(5'-adenylyl)-L-seryl-[protein] + diphosphate. It carries out the reaction L-threonyl-[protein] + ATP = 3-O-(5'-adenylyl)-L-threonyl-[protein] + diphosphate. It catalyses the reaction L-tyrosyl-[protein] + ATP = O-(5'-adenylyl)-L-tyrosyl-[protein] + diphosphate. The enzyme catalyses L-histidyl-[protein] + UTP = N(tele)-(5'-uridylyl)-L-histidyl-[protein] + diphosphate. The catalysed reaction is L-seryl-[protein] + UTP = O-(5'-uridylyl)-L-seryl-[protein] + diphosphate. It carries out the reaction L-tyrosyl-[protein] + UTP = O-(5'-uridylyl)-L-tyrosyl-[protein] + diphosphate. Functionally, nucleotidyltransferase involved in the post-translational modification of proteins. It can catalyze the addition of adenosine monophosphate (AMP) or uridine monophosphate (UMP) to a protein, resulting in modifications known as AMPylation and UMPylation. The chain is Protein nucleotidyltransferase YdiU from Methylorubrum extorquens (strain CM4 / NCIMB 13688) (Methylobacterium extorquens).